A 376-amino-acid chain; its full sequence is MPISYNKASVVVSLQSIIANYRRIRTVAQRPMPVIKSDAYGHGLEAVGMALEAEGARECAVGTVGEGAKLRKAGFGADIVALLGALDREDAQLAASSGIIPTVLDIAGLERLAAQGTPERPVRVALKFDTGMARLGFTEHDVSALCERLRTLPSVRPVMAVSHLAVADDPTQSAFTMAQGAAFARIMAGLRSNFPDIMGSLSNSAATLAHPQLHWDVQRPGIALYGSNPLRGTALARHGEGLLPAMSVSVPVLQVHPLPAGRSISYGRTYTATKDATVAIIAAGYADNYSRALSGRGVAVAGGRRVPVLGRVCMQTTAIDVTDVPGIATGDRVWLLGGPGPATVSADELADLWGTISYEVLCLLGMNPRRHDDSVE.

Lys-36 (proton acceptor; specific for D-alanine) is an active-site residue. Lys-36 carries the N6-(pyridoxal phosphate)lysine modification. Residue Arg-134 participates in substrate binding. Catalysis depends on Tyr-266, which acts as the Proton acceptor; specific for L-alanine. Met-314 contacts substrate.

The protein belongs to the alanine racemase family. Pyridoxal 5'-phosphate serves as cofactor.

The catalysed reaction is L-alanine = D-alanine. It functions in the pathway amino-acid biosynthesis; D-alanine biosynthesis; D-alanine from L-alanine: step 1/1. In terms of biological role, catalyzes the interconversion of L-alanine and D-alanine. May also act on other amino acids. The protein is Alanine racemase (alr) of Nitratidesulfovibrio vulgaris (strain ATCC 29579 / DSM 644 / CCUG 34227 / NCIMB 8303 / VKM B-1760 / Hildenborough) (Desulfovibrio vulgaris).